Consider the following 416-residue polypeptide: MSQIAILSVNHQLVPVEVREKVAFTPDKLIQALNNLHHIDGIDACIILSTCNRVEIYVASNHKNSEELLSNYLAKTHNIKRDIIDSYLNYFEGNEALTHLCNVATGLDSLVLGEPQILGQLKNAYHIAKEVKTLNKLLEKLFQHTFSTAKKVRTNTQIGASPVSIAYCAVKLSEKIFEQLSEQTVLLIGAGEMIELCAHYLNQKGVNKMIVANRTIENAKKIAHLYQAQSIGLKQFSSFVYKADIIISSTAASMPIIGKGLIESALKKRKHKPIFMLDIAIPRDIEPEVGQLDDVYLYTIDDLGQVVNDNIGNREKEKGLAQEIIVKQNQVFNKWLDTIPNEQMVQSYQFGANSIKNELLEKAIKQLKNGANSEDTIRKLADQLANKLLHLPFKNIKQTSIENLSQCEGCIPYIKN.

Residues 50 to 53, Ser109, 114 to 116, and Gln120 contribute to the substrate site; these read TCNR and EPQ. The active-site Nucleophile is Cys51. An NADP(+)-binding site is contributed by 189-194; that stretch reads GAGEMI.

The protein belongs to the glutamyl-tRNA reductase family. As to quaternary structure, homodimer.

It carries out the reaction (S)-4-amino-5-oxopentanoate + tRNA(Glu) + NADP(+) = L-glutamyl-tRNA(Glu) + NADPH + H(+). It participates in porphyrin-containing compound metabolism; protoporphyrin-IX biosynthesis; 5-aminolevulinate from L-glutamyl-tRNA(Glu): step 1/2. Catalyzes the NADPH-dependent reduction of glutamyl-tRNA(Glu) to glutamate 1-semialdehyde (GSA). The protein is Glutamyl-tRNA reductase of Ruthia magnifica subsp. Calyptogena magnifica.